The chain runs to 474 residues: Methylenetetrahydrofolate--tRNA-(uracil-5-)-methyltransferase TrmFO (474 aa).

13-18 is a binding site for FAD; sequence GGGLAG.

Belongs to the MnmG family. TrmFO subfamily. The cofactor is FAD.

The protein localises to the cytoplasm. The catalysed reaction is uridine(54) in tRNA + (6R)-5,10-methylene-5,6,7,8-tetrahydrofolate + NADH + H(+) = 5-methyluridine(54) in tRNA + (6S)-5,6,7,8-tetrahydrofolate + NAD(+). It catalyses the reaction uridine(54) in tRNA + (6R)-5,10-methylene-5,6,7,8-tetrahydrofolate + NADPH + H(+) = 5-methyluridine(54) in tRNA + (6S)-5,6,7,8-tetrahydrofolate + NADP(+). In terms of biological role, catalyzes the folate-dependent formation of 5-methyl-uridine at position 54 (M-5-U54) in all tRNAs. This Bartonella tribocorum (strain CIP 105476 / IBS 506) protein is Methylenetetrahydrofolate--tRNA-(uracil-5-)-methyltransferase TrmFO.